A 188-amino-acid chain; its full sequence is Probable chorismate pyruvate-lyase (188 aa).

Residues R90, L128, and E175 each contribute to the substrate site.

This sequence belongs to the UbiC family.

It is found in the cytoplasm. It carries out the reaction chorismate = 4-hydroxybenzoate + pyruvate. It functions in the pathway cofactor biosynthesis; ubiquinone biosynthesis. In terms of biological role, removes the pyruvyl group from chorismate, with concomitant aromatization of the ring, to provide 4-hydroxybenzoate (4HB) for the ubiquinone pathway. This Marinobacter nauticus (strain ATCC 700491 / DSM 11845 / VT8) (Marinobacter aquaeolei) protein is Probable chorismate pyruvate-lyase.